The following is a 210-amino-acid chain: Chaperone protein TorD (210 aa).

The protein belongs to the TorD/DmsD family. TorD subfamily.

It localises to the cytoplasm. Its function is as follows. Involved in the biogenesis of TorA. Acts on TorA before the insertion of the molybdenum cofactor and, as a result, probably favors a conformation of the apoenzyme that is competent for acquiring the cofactor. This is Chaperone protein TorD from Salmonella choleraesuis (strain SC-B67).